Here is a 267-residue protein sequence, read N- to C-terminus: Small ribosomal subunit protein uS2 (267 aa).

The segment at 226 to 267 is disordered; it reads AAAPNSASVREEEFSAESADEGKGRRAPAKKGEKKADAPAAE. Basic and acidic residues predominate over residues 245 to 267; sequence DEGKGRRAPAKKGEKKADAPAAE.

The protein belongs to the universal ribosomal protein uS2 family.

This chain is Small ribosomal subunit protein uS2, found in Xanthomonas oryzae pv. oryzae (strain MAFF 311018).